The following is a 1071-amino-acid chain: DNA-directed RNA polymerase subunit beta (1071 aa).

This sequence belongs to the RNA polymerase beta chain family. In plastids the minimal PEP RNA polymerase catalytic core is composed of four subunits: alpha, beta, beta', and beta''. When a (nuclear-encoded) sigma factor is associated with the core the holoenzyme is formed, which can initiate transcription.

The protein resides in the plastid. It is found in the chloroplast. The catalysed reaction is RNA(n) + a ribonucleoside 5'-triphosphate = RNA(n+1) + diphosphate. In terms of biological role, DNA-dependent RNA polymerase catalyzes the transcription of DNA into RNA using the four ribonucleoside triphosphates as substrates. This chain is DNA-directed RNA polymerase subunit beta, found in Panax ginseng (Korean ginseng).